We begin with the raw amino-acid sequence, 370 residues long: Forkhead box protein I1-A (370 aa).

Disordered stretches follow at residues 1 to 28 (MNPV…AQEA), 212 to 269 (DNGN…CPSP), and 342 to 370 (SSLP…QGRY). Positions 127–221 (RPPYSYSALI…DNGNFRRKRK (95 aa)) form a DNA-binding region, fork-head. The segment covering 232–245 (AKREEDHVSPKGKE) has biased composition (basic and acidic residues). Positions 349–370 (QKQPPYLQQLHPQQSPLYQGRY) are enriched in low complexity.

In terms of tissue distribution, initially localized to the animal hemisphere (the presumptive ectoderm) of early-mid blastula embryos. Becomes restricted to head placodes, excluding the otic placodes, by the tailbud stages.

It localises to the nucleus. In terms of biological role, transcription factor. Essential for ventral specification of the early cephalic (head) ectoderm during gastrulation, playing a role in the non-neural versus neural cell fate choice. Binds to DNA via the target sequence 5'-[AG]TAAA[CT]A-3', with 5'-ATAAACA-3' being the preferred binding site. In Xenopus laevis (African clawed frog), this protein is Forkhead box protein I1-A (foxi1-a).